Reading from the N-terminus, the 387-residue chain is Chaperone protein DnaJ (387 aa).

The region spanning 6-71 (DYYEILGVPR…EKRRKYDQFG (66 aa)) is the J domain. The segment at 146–228 (GCEKEIPIYR…CGGTGTVRRQ (83 aa)) adopts a CR-type zinc-finger fold. Zn(2+) contacts are provided by Cys159, Cys162, Cys176, Cys179, Cys202, Cys205, Cys216, and Cys219. CXXCXGXG motif repeat units follow at residues 159–166 (CSVCGGSG), 176–183 (CQKCGGTG), 202–209 (CDACGGVG), and 216–223 (CRECGGTG).

The protein belongs to the DnaJ family. In terms of assembly, homodimer. The cofactor is Zn(2+).

The protein localises to the cytoplasm. In terms of biological role, participates actively in the response to hyperosmotic and heat shock by preventing the aggregation of stress-denatured proteins and by disaggregating proteins, also in an autonomous, DnaK-independent fashion. Unfolded proteins bind initially to DnaJ; upon interaction with the DnaJ-bound protein, DnaK hydrolyzes its bound ATP, resulting in the formation of a stable complex. GrpE releases ADP from DnaK; ATP binding to DnaK triggers the release of the substrate protein, thus completing the reaction cycle. Several rounds of ATP-dependent interactions between DnaJ, DnaK and GrpE are required for fully efficient folding. Also involved, together with DnaK and GrpE, in the DNA replication of plasmids through activation of initiation proteins. This Caldicellulosiruptor saccharolyticus (strain ATCC 43494 / DSM 8903 / Tp8T 6331) protein is Chaperone protein DnaJ.